The primary structure comprises 198 residues: HTH-type transcriptional repressor DhaR (198 aa).

Residues 4-64 form the HTH tetR-type domain; that stretch reads TPVRQHLVEK…QVLQEFFSDL (61 aa).

Functionally, transcriptional repressor for the dhaA haloalkane dehalogenase gene. The sequence is that of HTH-type transcriptional repressor DhaR (dhaR) from Mycobacterium sp. (strain GP1).